Reading from the N-terminus, the 208-residue chain is Heavy metal-associated isoprenylated plant protein 42 (208 aa).

Residues F6–Q70 form the HMA domain. Residues A93 to T116 form a disordered region. Position 205 is a cysteine methyl ester (C205). C205 is lipidated: S-farnesyl cysteine. The propeptide at S206–M208 is removed in mature form.

The protein belongs to the HIPP family.

Probable heavy-metal-binding protein. The protein is Heavy metal-associated isoprenylated plant protein 42 of Arabidopsis thaliana (Mouse-ear cress).